Reading from the N-terminus, the 569-residue chain is Urease subunit alpha (569 aa).

The Urease domain occupies 131–569; that stretch reads GGMDAHIHFI…LPMAQRYFLF (439 aa). Positions 136, 138, and 218 each coordinate Ni(2+). An N6-carboxylysine modification is found at lysine 218. Histidine 220 lines the substrate pocket. Residues histidine 247 and histidine 273 each coordinate Ni(2+). Histidine 321 acts as the Proton donor in catalysis. Ni(2+) is bound at residue aspartate 361.

Belongs to the metallo-dependent hydrolases superfamily. Urease alpha subunit family. In terms of assembly, heterotrimer of UreA (gamma), UreB (beta) and UreC (alpha) subunits. Three heterotrimers associate to form the active enzyme. Requires Ni cation as cofactor. Post-translationally, carboxylation allows a single lysine to coordinate two nickel ions.

The protein resides in the cytoplasm. It carries out the reaction urea + 2 H2O + H(+) = hydrogencarbonate + 2 NH4(+). It participates in nitrogen metabolism; urea degradation; CO(2) and NH(3) from urea (urease route): step 1/1. The protein is Urease subunit alpha of Rhizobium rhizogenes (strain K84 / ATCC BAA-868) (Agrobacterium radiobacter).